A 148-amino-acid chain; its full sequence is Small ribosomal subunit protein bS16 (148 aa).

A disordered region spans residues 106-148 (QAAARAAAGAEDRPATTPKKAKKSGSAEEAEAAPATDAPAAGQ). The segment covering 137-148 (AAPATDAPAAGQ) has biased composition (low complexity).

Belongs to the bacterial ribosomal protein bS16 family.

In Frankia casuarinae (strain DSM 45818 / CECT 9043 / HFP020203 / CcI3), this protein is Small ribosomal subunit protein bS16.